Consider the following 504-residue polypeptide: Multicopper oxidase MmcO (504 aa).

A signal peptide (tat-type signal) is located at residues 1–44 (MPELATSGNAFDKRRFSRRGFLGAGIASGFALAACASKPTASGA). 4 residues coordinate Cu cation: His120, His122, His161, and His163. The Plastocyanin-like domain maps to 190–349 (EWIIILDDWT…NALARALLST (160 aa)). Residues His437, His440, His442, His485, Cys486, His487, and His491 each contribute to the Cu cation site.

The protein belongs to the multicopper oxidase family. Cu cation serves as cofactor. Post-translationally, predicted to be exported by the Tat system. The position of the signal peptide cleavage has not been experimentally proven.

The protein localises to the cell inner membrane. Its subcellular location is the periplasm. It carries out the reaction 4 Fe(2+) + O2 + 4 H(+) = 4 Fe(3+) + 2 H2O. In terms of biological role, required for copper resistance. In vitro, oxidizes organic substrates and Fe(2+). May act in vivo by oxidation of toxic periplasmic Cu(+). In Mycobacterium tuberculosis (strain ATCC 25618 / H37Rv), this protein is Multicopper oxidase MmcO.